A 208-amino-acid chain; its full sequence is Histone H1t (208 aa).

Over residues 1–12 (MSETAPAASSTL) the composition is skewed to polar residues. Positions 1 to 39 (MSETAPAASSTLVPAPVEKPSSKRRGKKPGLAPARKPRG) are disordered. Ser9 is subject to Phosphoserine. Residues 38-111 (RGFSVSKLIP…GASGSFKLSK (74 aa)) enclose the H15 domain. At Arg56 the chain carries Citrulline. Positions 95-208 (LVQTKGTGAS…TDLRKAAGRK (114 aa)) are disordered. The segment covering 121-134 (KGKKSASAKAKKMG) has biased composition (basic residues). Ser141 carries the post-translational modification Phosphoserine. Positions 143–154 (KSSKTKAVKKPK) are enriched in basic residues. Thr156 is subject to Phosphothreonine. A phosphoserine mark is found at Ser163 and Ser178. The span at 199–208 (TDLRKAAGRK) shows a compositional bias: basic and acidic residues.

It belongs to the histone H1/H5 family. Phosphorylated in early spermatids. In terms of processing, citrullination at Arg-56 (H1R54ci) by PADI4 takes place within the DNA-binding site of H1 and results in its displacement from chromatin and global chromatin decondensation, thereby promoting pluripotency and stem cell maintenance. As to expression, testis-specific.

It localises to the nucleus. The protein resides in the chromosome. In terms of biological role, testis-specific histone H1 that forms less compacted chromatin compared to other H1 histone subtypes. Formation of more relaxed chromatin may be required to promote chromatin architecture required for proper chromosome regulation during meiosis, such as homologous recombination. Histones H1 act as linkers that bind to nucleosomes and compact polynucleosomes into a higher-order chromatin configuration. The protein is Histone H1t of Mus musculus (Mouse).